Here is a 1266-residue protein sequence, read N- to C-terminus: 5-oxoprolinase 1 (1266 aa).

Belongs to the oxoprolinase family. Expressed in roots, stems, leaves, flowers and siliques.

It localises to the cytoplasm. It carries out the reaction 5-oxo-L-proline + ATP + 2 H2O = L-glutamate + ADP + phosphate + H(+). Catalyzes the cleavage of 5-oxo-L-proline to form L-glutamate coupled to the hydrolysis of ATP to ADP and inorganic phosphate. Acts in the glutathione degradation pathway. This is 5-oxoprolinase 1 from Arabidopsis thaliana (Mouse-ear cress).